The sequence spans 40 residues: MNYISFPTAQHAVDKIAQEFVIYSQLNHSRTYFPFWWFDA.

This is an uncharacterized protein from Haemophilus influenzae (strain ATCC 51907 / DSM 11121 / KW20 / Rd).